The sequence spans 1070 residues: DNA-directed RNA polymerase subunit beta (1070 aa).

The protein belongs to the RNA polymerase beta chain family. As to quaternary structure, in plastids the minimal PEP RNA polymerase catalytic core is composed of four subunits: alpha, beta, beta', and beta''. When a (nuclear-encoded) sigma factor is associated with the core the holoenzyme is formed, which can initiate transcription.

The protein resides in the plastid. It localises to the chloroplast. It carries out the reaction RNA(n) + a ribonucleoside 5'-triphosphate = RNA(n+1) + diphosphate. In terms of biological role, DNA-dependent RNA polymerase catalyzes the transcription of DNA into RNA using the four ribonucleoside triphosphates as substrates. The polypeptide is DNA-directed RNA polymerase subunit beta (Citrus sinensis (Sweet orange)).